Here is a 137-residue protein sequence, read N- to C-terminus: Large ribosomal subunit protein bL17 (137 aa).

The protein belongs to the bacterial ribosomal protein bL17 family. In terms of assembly, part of the 50S ribosomal subunit. Contacts protein L32.

The protein is Large ribosomal subunit protein bL17 of Caulobacter sp. (strain K31).